Consider the following 248-residue polypeptide: Ras-like protein family member 11B (248 aa).

The interval 30–248 is small GTPase-like; the sequence is ASSRVIKIAV…SSKVRTATSV (219 aa). GTP is bound by residues 41-48, 88-99, and 153-156; these read GGSGVGKT, DTPGVQINEQNL, and NKAD. The interval 206–228 is disordered; that stretch reads QNTGTSERRKNSIIPRPKSPNMQ.

Belongs to the small GTPase superfamily. Ras family.

It carries out the reaction GTP + H2O = GDP + phosphate + H(+). This chain is Ras-like protein family member 11B, found in Xenopus laevis (African clawed frog).